Here is a 133-residue protein sequence, read N- to C-terminus: ATP synthase epsilon chain, chloroplastic (133 aa).

The protein belongs to the ATPase epsilon chain family. As to quaternary structure, F-type ATPases have 2 components, CF(1) - the catalytic core - and CF(0) - the membrane proton channel. CF(1) has five subunits: alpha(3), beta(3), gamma(1), delta(1), epsilon(1). CF(0) has three main subunits: a, b and c.

It localises to the plastid. The protein resides in the chloroplast thylakoid membrane. Functionally, produces ATP from ADP in the presence of a proton gradient across the membrane. This Helianthus annuus (Common sunflower) protein is ATP synthase epsilon chain, chloroplastic.